The following is a 167-amino-acid chain: Translation initiation factor IF-3 (167 aa).

The protein belongs to the IF-3 family. In terms of assembly, monomer.

The protein localises to the cytoplasm. IF-3 binds to the 30S ribosomal subunit and shifts the equilibrium between 70S ribosomes and their 50S and 30S subunits in favor of the free subunits, thus enhancing the availability of 30S subunits on which protein synthesis initiation begins. The chain is Translation initiation factor IF-3 from Bacillus cereus (strain ATCC 14579 / DSM 31 / CCUG 7414 / JCM 2152 / NBRC 15305 / NCIMB 9373 / NCTC 2599 / NRRL B-3711).